An 825-amino-acid polypeptide reads, in one-letter code: E3 ubiquitin-protein ligase ICP0 (825 aa).

The segment covering 1 to 10 (MEPRPGTSSR) has biased composition (polar residues). Residues 1–121 (MEPRPGTSSR…VGEEEAEAGG (121 aa)) are disordered. The span at 46 to 57 (DSEEETEVGISD) shows a compositional bias: acidic residues. Residues 126-167 (CAVCTDEIAPPLRCQSFPCLHPFCIPCMKTWIPLRNTCPLCN) form an RING-type zinc finger. Disordered regions lie at residues 221–312 (RSLS…GGGP), 325–683 (PPAA…PAPG), and 803–825 (RHPW…GHGE). Acidic residues predominate over residues 242 to 251 (TDDEDDDLAD). Composition is skewed to low complexity over residues 273 to 283 (TRGTSQPAATR), 290 to 303 (PRSS…LRAG), and 350 to 367 (PPAR…VISD). The segment covering 368–379 (SPPPSPRRPAGP) has biased composition (pro residues). Low complexity-rich tracts occupy residues 380–394 (GPLS…QVSS) and 402–439 (PQSS…DAAG). Polar residues predominate over residues 456–468 (RMTQAQTDTQAQS). Gly residues predominate over residues 479-491 (GSGGPGAEGGPGV). Low complexity-rich tracts occupy residues 492–510 (PRGT…GAAA) and 519–540 (DSGP…PLAP). A compositionally biased stretch (basic and acidic residues) spans 552-563 (RAPDSDSGDRGH). Low complexity predominate over residues 567 to 641 (APASAGAAPP…GGSVASASGA (75 aa)). Residues 658 to 667 (GPRKCARKTR) show a composition bias toward basic residues. A compositionally biased stretch (low complexity) spans 811–825 (GAPAPAGDAPAGHGE).

Post-translationally, auto-ubiquitinated.

It carries out the reaction S-ubiquitinyl-[E2 ubiquitin-conjugating enzyme]-L-cysteine + [acceptor protein]-L-lysine = [E2 ubiquitin-conjugating enzyme]-L-cysteine + N(6)-ubiquitinyl-[acceptor protein]-L-lysine.. Functionally, evades nuclear antiviral defenses triggered by dsDNA viruses. Acts during the initial stages of lytic infection and the reactivation of latent viral genome. Prevents the antiviral effect of nuclear bodies by degrading host PML and SP100. Prevents antiviral response to viral DNA induced by IFI16 by degrading it. Additionally, inhibits host IRF3 nuclear signaling to prevent interferon production by the infected cells. This chain is E3 ubiquitin-protein ligase ICP0 (RL2), found in Homo sapiens (Human).